We begin with the raw amino-acid sequence, 227 residues long: MAGLLKESMRIKIYMEGTVNGYHFKCEGEGDGNPFEGTQNMRIRVTEGAPLPFAFDILSPCCAYGSKTFIKHTSGIPDYFKQSFPEGFTWERTTIYEDGGVLTAHQDTSLEGNCLIYKVKVLGTNFPADGPVMKKISGGWEPCTEIVYQDNGVLRGRNVMALKVSGRPPLICHLHSTYRSKKACALTMPGFHFADLRIQMPKKKKDEYFELYEASVARYSDVPEKAT.

Positions 63–65 (AYG) form a cross-link, 5-imidazolinone (Ala-Gly). The residue at position 64 (Tyr-64) is a 2,3-didehydrotyrosine.

Belongs to the GFP family. In terms of assembly, homotetramer. Post-translationally, contains a chromophore consisting of modified amino acid residues. The chromophore is formed by autocatalytic backbone condensation between Xaa-N and Gly-(N+2), and oxidation of Tyr-(N+1) to didehydrotyrosine. Maturation of the chromophore requires nothing other than molecular oxygen. The precise stereochemistry of the tyrosine has not been determined.

Non-fluorescent pigment protein that is mauve in color. The wild-type form is non-fluorescent. This Condylactis gigantea (Giant Caribbean anemone) protein is GFP-like non-fluorescent chromoprotein.